Reading from the N-terminus, the 464-residue chain is 3-isopropylmalate dehydratase large subunit (464 aa).

Positions 337, 397, and 400 each coordinate [4Fe-4S] cluster.

It belongs to the aconitase/IPM isomerase family. LeuC type 1 subfamily. Heterodimer of LeuC and LeuD. It depends on [4Fe-4S] cluster as a cofactor.

It catalyses the reaction (2R,3S)-3-isopropylmalate = (2S)-2-isopropylmalate. It functions in the pathway amino-acid biosynthesis; L-leucine biosynthesis; L-leucine from 3-methyl-2-oxobutanoate: step 2/4. Its function is as follows. Catalyzes the isomerization between 2-isopropylmalate and 3-isopropylmalate, via the formation of 2-isopropylmaleate. The chain is 3-isopropylmalate dehydratase large subunit from Bacillus anthracis (strain A0248).